The sequence spans 89 residues: MAKKSKIAKEKKRQKLVEQYAELRKELKEKGDYRALSKLPRDSAPARLHNRCEVTGRPRGYMRKFKMSRIAFRELAYKGQIPGVKKSSW.

It belongs to the universal ribosomal protein uS14 family. As to quaternary structure, part of the 30S ribosomal subunit. Contacts proteins S3 and S10.

Functionally, binds 16S rRNA, required for the assembly of 30S particles and may also be responsible for determining the conformation of the 16S rRNA at the A site. This Bacillus licheniformis (strain ATCC 14580 / DSM 13 / JCM 2505 / CCUG 7422 / NBRC 12200 / NCIMB 9375 / NCTC 10341 / NRRL NRS-1264 / Gibson 46) protein is Small ribosomal subunit protein uS14A.